The sequence spans 264 residues: ATP synthase subunit a (264 aa).

Helical transmembrane passes span 30 to 50, 90 to 110, 111 to 131, 134 to 154, 177 to 197, 208 to 228, and 235 to 255; these read WNID…WLFY, IAPL…MDMI, PVDW…KVVP, DVNI…YYSI, IPVN…SLAL, LIFI…ALGV, and LIFH…LTIV.

Belongs to the ATPase A chain family. In terms of assembly, F-type ATPases have 2 components, CF(1) - the catalytic core - and CF(0) - the membrane proton channel. CF(1) has five subunits: alpha(3), beta(3), gamma(1), delta(1), epsilon(1). CF(0) has three main subunits: a(1), b(2) and c(9-12). The alpha and beta chains form an alternating ring which encloses part of the gamma chain. CF(1) is attached to CF(0) by a central stalk formed by the gamma and epsilon chains, while a peripheral stalk is formed by the delta and b chains.

The protein resides in the cell inner membrane. Functionally, key component of the proton channel; it plays a direct role in the translocation of protons across the membrane. This chain is ATP synthase subunit a, found in Shewanella frigidimarina (strain NCIMB 400).